The chain runs to 456 residues: tRNA-2-methylthio-N(6)-dimethylallyladenosine synthase (456 aa).

In terms of domain architecture, MTTase N-terminal spans 18–134 (KKLFIETYGC…LPDLVASVEA (117 aa)). The [4Fe-4S] cluster site is built by C27, C63, C98, C172, C176, and C179. Residues 158 to 390 (CGNHISGFVS…IELQNRLSAE (233 aa)) enclose the Radical SAM core domain. One can recognise a TRAM domain in the interval 393–456 (ARDVGKTFEV…SATLKGEEVF (64 aa)).

The protein belongs to the methylthiotransferase family. MiaB subfamily. Monomer. [4Fe-4S] cluster serves as cofactor.

The protein resides in the cytoplasm. The enzyme catalyses N(6)-dimethylallyladenosine(37) in tRNA + (sulfur carrier)-SH + AH2 + 2 S-adenosyl-L-methionine = 2-methylsulfanyl-N(6)-dimethylallyladenosine(37) in tRNA + (sulfur carrier)-H + 5'-deoxyadenosine + L-methionine + A + S-adenosyl-L-homocysteine + 2 H(+). In terms of biological role, catalyzes the methylthiolation of N6-(dimethylallyl)adenosine (i(6)A), leading to the formation of 2-methylthio-N6-(dimethylallyl)adenosine (ms(2)i(6)A) at position 37 in tRNAs that read codons beginning with uridine. The protein is tRNA-2-methylthio-N(6)-dimethylallyladenosine synthase of Phocaeicola vulgatus (strain ATCC 8482 / DSM 1447 / JCM 5826 / CCUG 4940 / NBRC 14291 / NCTC 11154) (Bacteroides vulgatus).